The chain runs to 563 residues: Probable lysosomal cobalamin transporter (563 aa).

The next 5 helical transmembrane spans lie at 8–28 (LIWF…SVFI), 40–60 (FVTF…MLLP), 95–115 (VIYY…IPFA), 144–164 (YTLA…FAPM), and 188–208 (AFTF…VFYT). The N-linked (GlcNAc...) asparagine glycan is linked to asparagine 228. 4 helical membrane passes run 314 to 334 (GGFS…MTVI), 374 to 394 (IIFA…VVAV), 416 to 436 (MLLA…SVVM), and 506 to 526 (FGAL…VILV). The segment at 537 to 563 (ERQLDEDAEEAEEESLLASTGRSGNPT) is disordered. A compositionally biased stretch (acidic residues) spans 539 to 551 (QLDEDAEEAEEES).

The protein belongs to the LIMR family. LMBRD1 subfamily.

Its subcellular location is the lysosome membrane. Its function is as follows. Probable lysosomal cobalamin transporter. Required to export cobalamin from lysosomes allowing its conversion to cofactors. The protein is Probable lysosomal cobalamin transporter of Neosartorya fischeri (strain ATCC 1020 / DSM 3700 / CBS 544.65 / FGSC A1164 / JCM 1740 / NRRL 181 / WB 181) (Aspergillus fischerianus).